The following is a 164-amino-acid chain: MAMSHVQPMLLLLVSLFFLPALRGAIDFEYCAKNGNDYGTVTSIVVSPSVGPHENPTITINLFGSASKNIPAGTLVYVAFRDGEFTGLLKTYNLCDVSACNNEAEIEAGTNFELTLSDVLYVGYDEEIKYSVSLRRKTLEEEDPIIKMCVDFKVPAPAPAFVSI.

The N-terminal stretch at 1–24 (MAMSHVQPMLLLLVSLFFLPALRG) is a signal peptide.

Interacts with RUB1/NEDD8. Neddylated. Post-translationally, ubiquitinated.

It is found in the vacuole. Its subcellular location is the endoplasmic reticulum. Its function is as follows. May be involved in herbivory-mediated responses. May play a role in herbivory-associated molecular pattern (HAMP) recognition. May function is jasmonate (JA) signaling in response to HAMP. May play a role in defense response against the pathogens Altenaria brassicicola and Pseudomonas syringae. The chain is MD-2-related lipid-recognition protein 3 from Arabidopsis thaliana (Mouse-ear cress).